The chain runs to 254 residues: 4-hydroxy-tetrahydrodipicolinate reductase (254 aa).

7–12 (GASGRI) serves as a coordination point for NAD(+). Arg35 is a binding site for NADP(+). NAD(+) is bound by residues 91 to 93 (GTT) and 115 to 118 (AHNM). Residue His147 is the Proton donor/acceptor of the active site. A (S)-2,3,4,5-tetrahydrodipicolinate-binding site is contributed by His148. The active-site Proton donor is the Lys151. 157-158 (GT) serves as a coordination point for (S)-2,3,4,5-tetrahydrodipicolinate.

The protein belongs to the DapB family.

The protein localises to the cytoplasm. The enzyme catalyses (S)-2,3,4,5-tetrahydrodipicolinate + NAD(+) + H2O = (2S,4S)-4-hydroxy-2,3,4,5-tetrahydrodipicolinate + NADH + H(+). The catalysed reaction is (S)-2,3,4,5-tetrahydrodipicolinate + NADP(+) + H2O = (2S,4S)-4-hydroxy-2,3,4,5-tetrahydrodipicolinate + NADPH + H(+). It participates in amino-acid biosynthesis; L-lysine biosynthesis via DAP pathway; (S)-tetrahydrodipicolinate from L-aspartate: step 4/4. Its function is as follows. Catalyzes the conversion of 4-hydroxy-tetrahydrodipicolinate (HTPA) to tetrahydrodipicolinate. This Helicobacter pylori (strain G27) protein is 4-hydroxy-tetrahydrodipicolinate reductase.